Consider the following 203-residue polypeptide: Outer-membrane lipoprotein LolB (203 aa).

The signal sequence occupies residues 1 to 18; that stretch reads MYRLLCLLALLTAAGLMG. Cys-19 is lipidated: N-palmitoyl cysteine. Cys-19 is lipidated: S-diacylglycerol cysteine.

Belongs to the LolB family. As to quaternary structure, monomer.

It is found in the cell outer membrane. In terms of biological role, plays a critical role in the incorporation of lipoproteins in the outer membrane after they are released by the LolA protein. This Cellvibrio japonicus (strain Ueda107) (Pseudomonas fluorescens subsp. cellulosa) protein is Outer-membrane lipoprotein LolB.